A 356-amino-acid chain; its full sequence is Chorismate synthase (356 aa).

Arg-46 is a binding site for NADP(+). FMN contacts are provided by residues 122–124 (RSS), 234–235 (NG), Gly-274, 289–293 (KPTPS), and Arg-315.

This sequence belongs to the chorismate synthase family. In terms of assembly, homotetramer. The cofactor is FMNH2.

The catalysed reaction is 5-O-(1-carboxyvinyl)-3-phosphoshikimate = chorismate + phosphate. Its pathway is metabolic intermediate biosynthesis; chorismate biosynthesis; chorismate from D-erythrose 4-phosphate and phosphoenolpyruvate: step 7/7. Its function is as follows. Catalyzes the anti-1,4-elimination of the C-3 phosphate and the C-6 proR hydrogen from 5-enolpyruvylshikimate-3-phosphate (EPSP) to yield chorismate, which is the branch point compound that serves as the starting substrate for the three terminal pathways of aromatic amino acid biosynthesis. This reaction introduces a second double bond into the aromatic ring system. The sequence is that of Chorismate synthase from Campylobacter fetus subsp. fetus (strain 82-40).